Here is a 367-residue protein sequence, read N- to C-terminus: Cobalt-precorrin-5B C(1)-methyltransferase (367 aa).

The protein belongs to the CbiD family.

It catalyses the reaction Co-precorrin-5B + S-adenosyl-L-methionine = Co-precorrin-6A + S-adenosyl-L-homocysteine. It functions in the pathway cofactor biosynthesis; adenosylcobalamin biosynthesis; cob(II)yrinate a,c-diamide from sirohydrochlorin (anaerobic route): step 6/10. Its function is as follows. Catalyzes the methylation of C-1 in cobalt-precorrin-5B to form cobalt-precorrin-6A. This chain is Cobalt-precorrin-5B C(1)-methyltransferase, found in Priestia megaterium (Bacillus megaterium).